Consider the following 156-residue polypeptide: MNFNATLIGQSVAFLIFVWFCMKFVWPPLMNAIEERQKRIADGLADADRAVKDLELARSKATDQLKEAKATANEIIEQANKRKAQIVDEAKAEADAERAKIIAQGKAEIEAERNRVKEDLRKQVATLAILGAEKILERSIDPAAHSDIVNKLVAEI.

The helical transmembrane segment at 7-29 (LIGQSVAFLIFVWFCMKFVWPPL) threads the bilayer.

Belongs to the ATPase B chain family. F-type ATPases have 2 components, F(1) - the catalytic core - and F(0) - the membrane proton channel. F(1) has five subunits: alpha(3), beta(3), gamma(1), delta(1), epsilon(1). F(0) has three main subunits: a(1), b(2) and c(10-14). The alpha and beta chains form an alternating ring which encloses part of the gamma chain. F(1) is attached to F(0) by a central stalk formed by the gamma and epsilon chains, while a peripheral stalk is formed by the delta and b chains.

It localises to the cell inner membrane. In terms of biological role, f(1)F(0) ATP synthase produces ATP from ADP in the presence of a proton or sodium gradient. F-type ATPases consist of two structural domains, F(1) containing the extramembraneous catalytic core and F(0) containing the membrane proton channel, linked together by a central stalk and a peripheral stalk. During catalysis, ATP synthesis in the catalytic domain of F(1) is coupled via a rotary mechanism of the central stalk subunits to proton translocation. Component of the F(0) channel, it forms part of the peripheral stalk, linking F(1) to F(0). The chain is ATP synthase subunit b from Shewanella denitrificans (strain OS217 / ATCC BAA-1090 / DSM 15013).